Reading from the N-terminus, the 1164-residue chain is IgA FC receptor (1164 aa).

A signal peptide spans methionine 1 to alanine 37. 2 disordered regions span residues lysine 54–threonine 75 and histidine 167–aspartate 220. Polar residues predominate over residues methionine 59 to leucine 73. Basic and acidic residues-rich tracts occupy residues histidine 167–alanine 176 and lysine 183–aspartate 220. IgA-binding stretches follow at residues asparagine 199–leucine 438 and threonine 439–threonine 826. Residues glutamine 434–glutamine 534 form the Ig-like domain. The span at lysine 536–aspartate 564 shows a compositional bias: basic and acidic residues. Disordered stretches follow at residues lysine 536–glutamine 567 and glutamate 823–leucine 947. Residues proline 911–proline 920 are compositionally biased toward pro residues. Positions leucine 1132 to glycine 1136 match the LPXTG sorting signal motif. Threonine 1135 bears the Pentaglycyl murein peptidoglycan amidated threonine mark. Positions glycine 1136–serine 1164 are cleaved as a propeptide — removed by sortase.

The protein resides in the secreted. Its subcellular location is the cell wall. This is IgA FC receptor (bag) from Streptococcus agalactiae.